A 588-amino-acid chain; its full sequence is Zinc finger protein 599 (588 aa).

One can recognise a KRAB domain in the interval 9–80 (VSFEDVVVTF…KRGLSQSTCA (72 aa)). 14 consecutive C2H2-type zinc fingers follow at residues 199–221 (YTCT…QQIH), 227–249 (YECN…MRLH), 255–277 (YKCI…QRIH), 283–305 (YECK…NMTH), 311–333 (FLCK…MRIH), 339–361 (YECG…NVTH), 367–389 (FLCK…MRIH), 395–417 (YECG…KRTH), 423–445 (FECK…MRIH), 451–473 (YECS…NRTH), 479–501 (LECK…MRIH), 507–529 (YVCR…NRIH), 535–557 (FECK…MRTH), and 563–585 (FECN…RKIH).

Belongs to the krueppel C2H2-type zinc-finger protein family.

The protein localises to the nucleus. May be involved in transcriptional regulation. The chain is Zinc finger protein 599 (ZNF599) from Homo sapiens (Human).